Here is a 353-residue protein sequence, read N- to C-terminus: tRNA N6-adenosine threonylcarbamoyltransferase (353 aa).

Fe cation contacts are provided by H111 and H115. Residues 148 to 152, D181, G194, and N286 each bind substrate; that span reads LVSGG. D314 lines the Fe cation pocket.

It belongs to the KAE1 / TsaD family. The cofactor is Fe(2+).

The protein localises to the cytoplasm. The catalysed reaction is L-threonylcarbamoyladenylate + adenosine(37) in tRNA = N(6)-L-threonylcarbamoyladenosine(37) in tRNA + AMP + H(+). Its function is as follows. Required for the formation of a threonylcarbamoyl group on adenosine at position 37 (t(6)A37) in tRNAs that read codons beginning with adenine. Is involved in the transfer of the threonylcarbamoyl moiety of threonylcarbamoyl-AMP (TC-AMP) to the N6 group of A37, together with TsaE and TsaB. TsaD likely plays a direct catalytic role in this reaction. This Blochmanniella floridana protein is tRNA N6-adenosine threonylcarbamoyltransferase.